A 316-amino-acid polypeptide reads, in one-letter code: DNA-directed RNA polymerase subunit alpha (316 aa).

An alpha N-terminal domain (alpha-NTD) region spans residues 1 to 230 (MIEFEKPNIH…EHLAMFVDLT (230 aa)). Residues 247 to 316 (KEKMLEMTIE…DLGLSLRKED (70 aa)) form an alpha C-terminal domain (alpha-CTD) region.

Belongs to the RNA polymerase alpha chain family. Homodimer. The RNAP catalytic core consists of 2 alpha, 1 beta, 1 beta' and 1 omega subunit. When a sigma factor is associated with the core the holoenzyme is formed, which can initiate transcription.

It catalyses the reaction RNA(n) + a ribonucleoside 5'-triphosphate = RNA(n+1) + diphosphate. Its function is as follows. DNA-dependent RNA polymerase catalyzes the transcription of DNA into RNA using the four ribonucleoside triphosphates as substrates. The polypeptide is DNA-directed RNA polymerase subunit alpha (Levilactobacillus brevis (strain ATCC 367 / BCRC 12310 / CIP 105137 / JCM 1170 / LMG 11437 / NCIMB 947 / NCTC 947) (Lactobacillus brevis)).